The chain runs to 178 residues: ATP synthase subunit delta (178 aa).

The protein belongs to the ATPase delta chain family. F-type ATPases have 2 components, F(1) - the catalytic core - and F(0) - the membrane proton channel. F(1) has five subunits: alpha(3), beta(3), gamma(1), delta(1), epsilon(1). F(0) has three main subunits: a(1), b(2) and c(10-14). The alpha and beta chains form an alternating ring which encloses part of the gamma chain. F(1) is attached to F(0) by a central stalk formed by the gamma and epsilon chains, while a peripheral stalk is formed by the delta and b chains.

It is found in the cell inner membrane. In terms of biological role, f(1)F(0) ATP synthase produces ATP from ADP in the presence of a proton or sodium gradient. F-type ATPases consist of two structural domains, F(1) containing the extramembraneous catalytic core and F(0) containing the membrane proton channel, linked together by a central stalk and a peripheral stalk. During catalysis, ATP synthesis in the catalytic domain of F(1) is coupled via a rotary mechanism of the central stalk subunits to proton translocation. This protein is part of the stalk that links CF(0) to CF(1). It either transmits conformational changes from CF(0) to CF(1) or is implicated in proton conduction. The protein is ATP synthase subunit delta of Aromatoleum aromaticum (strain DSM 19018 / LMG 30748 / EbN1) (Azoarcus sp. (strain EbN1)).